The sequence spans 189 residues: dCTP deaminase, dUMP-forming (189 aa).

DCTP contacts are provided by residues 101–106, D119, 127–129, Q148, Y162, and Q174; these read KSSLGR and TLE. E129 serves as the catalytic Proton donor/acceptor.

It belongs to the dCTP deaminase family. Homotrimer.

The enzyme catalyses dCTP + 2 H2O = dUMP + NH4(+) + diphosphate. The protein operates within pyrimidine metabolism; dUMP biosynthesis; dUMP from dCTP: step 1/1. Its function is as follows. Bifunctional enzyme that catalyzes both the deamination of dCTP to dUTP and the hydrolysis of dUTP to dUMP without releasing the toxic dUTP intermediate. This chain is dCTP deaminase, dUMP-forming, found in Rhodococcus jostii (strain RHA1).